We begin with the raw amino-acid sequence, 185 residues long: Adenylyl-sulfate kinase (185 aa).

13–20 serves as a coordination point for ATP; sequence GLSGAGKS. S86 (phosphoserine intermediate) is an active-site residue.

This sequence belongs to the APS kinase family.

The catalysed reaction is adenosine 5'-phosphosulfate + ATP = 3'-phosphoadenylyl sulfate + ADP + H(+). The protein operates within sulfur metabolism; hydrogen sulfide biosynthesis; sulfite from sulfate: step 2/3. Functionally, catalyzes the synthesis of activated sulfate. The polypeptide is Adenylyl-sulfate kinase (Myxococcus xanthus (strain DK1622)).